The sequence spans 159 residues: Ribosomal RNA large subunit methyltransferase H (159 aa).

Residues Leu76, Gly108, and 127-132 contribute to the S-adenosyl-L-methionine site; that span reads FSKMTL.

This sequence belongs to the RNA methyltransferase RlmH family. As to quaternary structure, homodimer.

It is found in the cytoplasm. It carries out the reaction pseudouridine(1915) in 23S rRNA + S-adenosyl-L-methionine = N(3)-methylpseudouridine(1915) in 23S rRNA + S-adenosyl-L-homocysteine + H(+). Functionally, specifically methylates the pseudouridine at position 1915 (m3Psi1915) in 23S rRNA. This chain is Ribosomal RNA large subunit methyltransferase H, found in Bacillus thuringiensis subsp. konkukian (strain 97-27).